We begin with the raw amino-acid sequence, 265 residues long: MDTAQKQRWAITLSYDGSRFYGWQKQADGVPTVQAALETALAQIAGEAVSTTVAGRTDTGVHATAQVVHFDTTAARPQQAWVRGVNAHLPEGIAVLHARQVAPEFHARFDAYGRHYRYLLESVPVRSPLLKNRAGWTHLKLDIGPMRRAAALLIGEQDFSSFRAAECQAKSPVKTIYRADLTQSSGLVRLDLHGNAFLHHMVRNIMGALVYVGSGRLSVEGFAALIQERSRLKAPPTFMPDGLYLTGVDYPEAYGIIRPQIPEWL.

Residue D58 is the Nucleophile of the active site. Y116 contributes to the substrate binding site.

This sequence belongs to the tRNA pseudouridine synthase TruA family. As to quaternary structure, homodimer.

The catalysed reaction is uridine(38/39/40) in tRNA = pseudouridine(38/39/40) in tRNA. Its function is as follows. Formation of pseudouridine at positions 38, 39 and 40 in the anticodon stem and loop of transfer RNAs. This chain is tRNA pseudouridine synthase A, found in Neisseria meningitidis serogroup C / serotype 2a (strain ATCC 700532 / DSM 15464 / FAM18).